The chain runs to 233 residues: Histone H1-I (233 aa).

2 disordered regions span residues 1-55 (MSDS…HPPV) and 115-233 (TGAS…KKSK). A compositionally biased stretch (low complexity) spans 17 to 29 (KAATPAKSPAKSP). One can recognise an H15 domain in the interval 51 to 125 (THPPVSEMVV…GASGSFKMPP (75 aa)). Basic and acidic residues-rich tracts occupy residues 128–137 (KKVDKPEAAP) and 144–155 (PKREIEKKEKKV). 3 stretches are compositionally biased toward basic residues: residues 172 to 186 (AAKK…KKAA), 199 to 213 (SPKK…KPTP), and 223 to 233 (AAAKKPAKKSK).

Belongs to the histone H1/H5 family.

The protein localises to the nucleus. It is found in the chromosome. Its function is as follows. Histones H1 are necessary for the condensation of nucleosome chains into higher-order structures. This is Histone H1-I from Glyptotendipes salinus (Midge).